The following is a 466-amino-acid chain: tRNA modification GTPase MnmE (466 aa).

(6S)-5-formyl-5,6,7,8-tetrahydrofolate-binding residues include R24, E85, and K128. The TrmE-type G domain maps to 224–384 (GLNIVLAGQP…LRTELLHLVG (161 aa)). K(+) is bound at residue N234. Residues 234–239 (NVGKSS), 253–259 (TPIAGTT), and 278–281 (DTAG) each bind GTP. S238 is a binding site for Mg(2+). Residues T253, I255, and T258 each coordinate K(+). T259 contributes to the Mg(2+) binding site. K466 provides a ligand contact to (6S)-5-formyl-5,6,7,8-tetrahydrofolate.

The protein belongs to the TRAFAC class TrmE-Era-EngA-EngB-Septin-like GTPase superfamily. TrmE GTPase family. As to quaternary structure, homodimer. Heterotetramer of two MnmE and two MnmG subunits. The cofactor is K(+).

The protein localises to the cytoplasm. Functionally, exhibits a very high intrinsic GTPase hydrolysis rate. Involved in the addition of a carboxymethylaminomethyl (cmnm) group at the wobble position (U34) of certain tRNAs, forming tRNA-cmnm(5)s(2)U34. The polypeptide is tRNA modification GTPase MnmE (Herminiimonas arsenicoxydans).